A 342-amino-acid chain; its full sequence is Strictosidine synthase (342 aa).

The signal sequence occupies residues 1–20 (KLSDSQTMALFTVFLLFLSS). N89 is a glycosylation site (N-linked (GlcNAc...) asparagine).

It belongs to the strictosidine synthase family. In terms of assembly, monomer.

It is found in the vacuole. The enzyme catalyses 3alpha(S)-strictosidine + H2O = secologanin + tryptamine. It functions in the pathway alkaloid biosynthesis; 3alpha(S)-strictosidine biosynthesis; 3alpha(S)-strictosidine from secologanin and tryptamine: step 1/1. Catalyzes the stereospecific condensation of tryptamine with secologanin to form strictosidine, the key intermediate of indole alkaloid biosynthesis. The sequence is that of Strictosidine synthase (STR1) from Rauvolfia mannii.